The following is a 290-amino-acid chain: ATP phosphoribosyltransferase (290 aa).

This sequence belongs to the ATP phosphoribosyltransferase family. Long subfamily. Requires Mg(2+) as cofactor.

It is found in the cytoplasm. The catalysed reaction is 1-(5-phospho-beta-D-ribosyl)-ATP + diphosphate = 5-phospho-alpha-D-ribose 1-diphosphate + ATP. The protein operates within amino-acid biosynthesis; L-histidine biosynthesis; L-histidine from 5-phospho-alpha-D-ribose 1-diphosphate: step 1/9. Feedback inhibited by histidine. In terms of biological role, catalyzes the condensation of ATP and 5-phosphoribose 1-diphosphate to form N'-(5'-phosphoribosyl)-ATP (PR-ATP). Has a crucial role in the pathway because the rate of histidine biosynthesis seems to be controlled primarily by regulation of HisG enzymatic activity. In Saccharolobus solfataricus (strain ATCC 35092 / DSM 1617 / JCM 11322 / P2) (Sulfolobus solfataricus), this protein is ATP phosphoribosyltransferase (hisG).